Reading from the N-terminus, the 509-residue chain is Histidine ammonia-lyase (509 aa).

The 5-imidazolinone (Ala-Gly) cross-link spans 142–144; it reads ASG. S143 is modified (2,3-didehydroalanine (Ser)).

This sequence belongs to the PAL/histidase family. In terms of processing, contains an active site 4-methylidene-imidazol-5-one (MIO), which is formed autocatalytically by cyclization and dehydration of residues Ala-Ser-Gly.

Its subcellular location is the cytoplasm. It carries out the reaction L-histidine = trans-urocanate + NH4(+). The protein operates within amino-acid degradation; L-histidine degradation into L-glutamate; N-formimidoyl-L-glutamate from L-histidine: step 1/3. The protein is Histidine ammonia-lyase of Pseudomonas aeruginosa (strain LESB58).